A 98-amino-acid chain; its full sequence is uncharacterized protein (98 aa).

A disordered region spans residues 77 to 98 (SERAGEEVPPLAVAGSDDGHDH).

It to M.tuberculosis Rv1991c and Rv3269.

This is an uncharacterized protein from Mycobacterium bovis (strain ATCC BAA-935 / AF2122/97).